The following is a 449-amino-acid chain: Methionine aminopeptidase 2 (449 aa).

Residues 1–91 (MAAQAAPELA…PRIPLTTLFP (91 aa)) are disordered. Residues 34–50 (EEAENEGDSEDDRDDEQ) are compositionally biased toward acidic residues. Basic residues predominate over residues 61–75 (KKKKKKRPKKKKKTA). Substrate is bound at residue His199. The a divalent metal cation site is built by Asp219, Asp230, and His299. Position 307 (His307) interacts with substrate. Residues Glu335 and Glu430 each contribute to the a divalent metal cation site.

Belongs to the peptidase M24A family. Methionine aminopeptidase eukaryotic type 2 subfamily. Co(2+) is required as a cofactor. Zn(2+) serves as cofactor. Requires Mn(2+) as cofactor. The cofactor is Fe(2+).

The protein localises to the cytoplasm. It carries out the reaction Release of N-terminal amino acids, preferentially methionine, from peptides and arylamides.. Cotranslationally removes the N-terminal methionine from nascent proteins. The N-terminal methionine is often cleaved when the second residue in the primary sequence is small and uncharged (Met-Ala-, Cys, Gly, Pro, Ser, Thr, or Val). The sequence is that of Methionine aminopeptidase 2 from Trichophyton verrucosum (strain HKI 0517).